The chain runs to 757 residues: Mitofusin-2 (757 aa).

Residues 1 to 604 (MSLLFSRCNS…TQEEFMVSMV (604 aa)) are Cytoplasmic-facing. Residues 30-94 (KHFVTAKKKI…VRGISEVLAR (65 aa)) are part of a helix bundle domain, formed by helices from N-terminal and C-terminal regions. The 250-residue stretch at 93-342 (ARRHMKVAFF…VRMFEFQNFE (250 aa)) folds into the Dynamin-type G domain. The segment at 103-110 (GRTSNGKS) is G1 motif. Residue 106 to 111 (SNGKST) participates in GTP binding. Thr111 carries the post-translational modification Phosphothreonine; by PINK1. The G2 motif stretch occupies residues 129–130 (TT). The G3 motif stretch occupies residues 199 to 202 (DSPG). GTP is bound at residue 258-261 (NRWD). The interval 258-261 (NRWD) is G4 motif. Residue Glu288 is a region of interest, G5 motif. 2 residues coordinate GTP: Ser305 and Lys307. The part of a helix bundle domain, formed by helices from N-terminal and C-terminal regions stretch occupies residues 359–385 (EQHTVRAKQIAEAVRLIMDSLHMAARE). Residues 391 to 434 (EEMREERQDRLKFIDKQLELLAQDYKLRIKQITEEVERQVSTAM) adopt a coiled-coil conformation. The residue at position 442 (Ser442) is a Phosphoserine; by PINK1. Residues 605 to 625 (TGLASLTSRTSMGILVVGGVV) form a helical membrane-spanning segment. Position 626 (Trp626) is a topological domain, mitochondrial intermembrane. A helical transmembrane segment spans residues 627-647 (KAVGWRLIALSFGLYGLLYVY). Topologically, residues 648–757 (ERLTWTTKAK…FTHQYLQPSR (110 aa)) are cytoplasmic. The stretch at 695–738 (TFAHLCQQVDVTRENLEQEIAAMNKKIEVLDSLQSKAKLLRNKA) forms a coiled coil. Positions 722 to 753 (EVLDSLQSKAKLLRNKAGWLDSELNMFTHQYL) are part of a helix bundle domain, formed by helices from N-terminal and C-terminal regions.

The protein belongs to the TRAFAC class dynamin-like GTPase superfamily. Dynamin/Fzo/YdjA family. Mitofusin subfamily. Forms homomultimers and heteromultimers with MFN1. Oligomerization is essential for mitochondrion fusion. Interacts with VAT1. Interacts with STOML2; may form heterooligomers. Interacts (phosphorylated) with PRKN. Interacts with EIF2AK3. Interacts with THG1L; THG1L probably functions as a guanyl-nucleotide exchange factor/GEF, activating MFN2. Post-translationally, phosphorylated by PINK1. In terms of processing, ubiquitinated by non-degradative ubiquitin by PRKN, promoting mitochondrial fusion; deubiquitination by USP30 inhibits mitochondrial fusion. Ubiquitinated by HUWE1 when dietary stearate (C18:0) levels are low; ubiquitination inhibits mitochondrial fusion. In terms of tissue distribution, ubiquitous; expressed at low level. Highly expressed in heart and kidney.

Its subcellular location is the mitochondrion outer membrane. The catalysed reaction is GTP + H2O = GDP + phosphate + H(+). Mitochondrial outer membrane GTPase that mediates mitochondrial clustering and fusion. Mitochondria are highly dynamic organelles, and their morphology is determined by the equilibrium between mitochondrial fusion and fission events. Overexpression induces the formation of mitochondrial networks. Membrane clustering requires GTPase activity and may involve a major rearrangement of the coiled coil domains. Plays a central role in mitochondrial metabolism and may be associated with obesity and/or apoptosis processes. Plays an important role in the regulation of vascular smooth muscle cell proliferation. Involved in the clearance of damaged mitochondria via selective autophagy (mitophagy). Is required for PRKN recruitment to dysfunctional mitochondria. Involved in the control of unfolded protein response (UPR) upon ER stress including activation of apoptosis and autophagy during ER stress. Acts as an upstream regulator of EIF2AK3 and suppresses EIF2AK3 activation under basal conditions. This chain is Mitofusin-2, found in Homo sapiens (Human).